We begin with the raw amino-acid sequence, 506 residues long: MDAHAITCASWNMLKAQLEAGAISSLQIVRAFRNVYEEDTRSASPLGALVEFFSDAEEHARTADNLRASCAQSTKTAGANGGSVSGKPLLGLPFAVKDNISVKGKHCTCGSKLLADYRAPYDATVVARLRAAGAIPLGRTNMDEFAMGSSTEYSVYGPTRNPRDRSRTSGGSSGGSAAAVAGGQAPFALGTETGGSVRLPAAYCGLYGLKPTYGLLSRYGVVAFGSSLDQIGFFATCIDDIALALSVTSGKDLYDSTSTCPPPATGRHAVSHHLAPFSAHECSILRAAVPRELVDAPGVHPDVSAQFQRFLTWLRAQNVQVEEVTLPALQAAVPVYYLVATAEAASNLARFDGIRYGQRGDTDALLENYYRAVRTSGFGPEVQRRIIVGNYVLSRHFSGDYYRTSVRVRSRIEQECTQLLCSYHFIVCPTAATGAFPLGERIHDPLAMYCSDLFTTFVNLARLPALSVPVGTSGTGLPIGIQIIGSQWQECAVLRLAKRWEEAPHV.

Active-site charge relay system residues include Lys-97 and Ser-172. The disordered stretch occupies residues 153–177 (YSVYGPTRNPRDRSRTSGGSSGGSA). Ser-196 functions as the Acyl-ester intermediate in the catalytic mechanism.

The protein belongs to the amidase family. GatA subfamily. Heterotrimer of A, B and C subunits.

It catalyses the reaction L-glutamyl-tRNA(Gln) + L-glutamine + ATP + H2O = L-glutaminyl-tRNA(Gln) + L-glutamate + ADP + phosphate + H(+). Its function is as follows. Allows the formation of correctly charged Gln-tRNA(Gln) through the transamidation of misacylated Glu-tRNA(Gln) in organisms which lack glutaminyl-tRNA synthetase. The reaction takes place in the presence of glutamine and ATP through an activated gamma-phospho-Glu-tRNA(Gln). This chain is Glutamyl-tRNA(Gln) amidotransferase subunit A (gatA), found in Treponema pallidum (strain Nichols).